A 192-amino-acid chain; its full sequence is uncharacterized protein (192 aa).

Residues 29 to 160 (QRQAAVLIPV…PLDVYRRGNS (132 aa)) form the Nudix hydrolase domain. The short motif at 67–89 (GAVDSTDASLIAAALREAQEEVA) is the Nudix box element. Mg(2+) is bound by residues E83 and E87.

It belongs to the Nudix hydrolase family. PCD1 subfamily. It depends on Mn(2+) as a cofactor. Mg(2+) serves as cofactor.

Functionally, probably mediates the hydrolysis of some nucleoside diphosphate derivatives. This is an uncharacterized protein from Salmonella dublin (strain CT_02021853).